The following is a 258-amino-acid chain: Transcription initiation factor TFIID subunit 9B (258 aa).

An N-acetylmethionine modification is found at methionine 1. Serine 147 is modified (phosphoserine). A phosphothreonine mark is found at threonine 159 and threonine 174. At serine 177 the chain carries Phosphoserine. Residues 227-236 (SSQSTATDSN) show a composition bias toward polar residues. The tract at residues 227–258 (SSQSTATDSNPLKRKHDDDDDDDDDDDDNDTM) is disordered. The segment covering 244–258 (DDDDDDDDDDDNDTM) has biased composition (acidic residues).

Belongs to the TAF9 family. In terms of assembly, binds TAF5 and TAF6. Component of TFIID and the TATA-binding protein-free TAF complex (TFTC). TFIID is composed of TATA binding protein (TBP) and a number of TBP-associated factors (TAFs). Binds N-terminal domain of p53/TP53 which is essential for transcription.

The protein localises to the nucleus. Functionally, essential for cell viability. TAF9 and TAF9L are involved in transcriptional activation as well as repression of distinct but overlapping sets of genes. May have a role in gene regulation associated with apoptosis. TAFs are components of the transcription factor IID (TFIID) complex, the TBP-free TAFII complex (TFTC), the PCAF histone acetylase complex and the STAGA transcription coactivator-HAT complex. TFIID or TFTC are essential for the regulation of RNA polymerase II-mediated transcription. The protein is Transcription initiation factor TFIID subunit 9B (Taf9b) of Rattus norvegicus (Rat).